A 542-amino-acid chain; its full sequence is ABC transport system permease protein p69 (542 aa).

12 helical membrane-spanning segments follow: residues 23-43 (ALAIIVLVVIIYSFIDNFSGF), 77-97 (IFYVVSGSILGFVIALWFSYL), 114-134 (FTIFLRSFPVLVFAFLFNNLF), 140-160 (ATLTITWFSWLWSTKYITAFF), 212-232 (LSIAGITGIGELIATPLGGTV), 236-256 (LVLIPMLTLIGFLLFLEASVF), 287-307 (VMIYILALVLAAFTLANLVQL), 350-370 (TQAISLITLVFVLALLFGFLA), 386-406 (LLVIRVIPSVLLFRLFDPIIF), 412-432 (IIFVLAIHSAASYGQLITINF), 481-501 (LVVFGIFGGSIIGGRINNFFE), and 509-529 (GTITLPLMVYLMVFEVILMAV). Residues 349–526 (TTQAISLITL…VYLMVFEVIL (178 aa)) form the ABC transmembrane type-1 domain.

This sequence belongs to the binding-protein-dependent transport system permease family.

It is found in the cell membrane. Functionally, probably part of a high-affinity transport system. This Mycoplasma pneumoniae (strain ATCC 29342 / M129 / Subtype 1) (Mycoplasmoides pneumoniae) protein is ABC transport system permease protein p69 (p69).